The chain runs to 292 residues: uncharacterized protein (292 aa).

Belongs to the glycosyltransferase 2 family. WaaE/KdtX subfamily.

This is an uncharacterized protein from Rickettsia typhi (strain ATCC VR-144 / Wilmington).